The chain runs to 265 residues: Glutamate racemase (265 aa).

Substrate contacts are provided by residues 7 to 8 (DS) and 39 to 40 (YG). The active-site Proton donor/acceptor is Cys-70. 71 to 72 (NT) contributes to the substrate binding site. The active-site Proton donor/acceptor is the Cys-182. Residue 183–184 (TH) participates in substrate binding.

This sequence belongs to the aspartate/glutamate racemases family.

It catalyses the reaction L-glutamate = D-glutamate. Its pathway is cell wall biogenesis; peptidoglycan biosynthesis. Provides the (R)-glutamate required for cell wall biosynthesis. In Lachnospira eligens (strain ATCC 27750 / DSM 3376 / VPI C15-48 / C15-B4) (Eubacterium eligens), this protein is Glutamate racemase.